Here is a 71-residue protein sequence, read N- to C-terminus: Protein Tlp homolog (71 aa).

A disordered region spans residues 30 to 56; that stretch reads ETLQNNSLSRDQRQAIMEKNKRREESI. A compositionally biased stretch (basic and acidic residues) spans 39–56; it reads RDQRQAIMEKNKRREESI.

Belongs to the Tlp family.

This chain is Protein Tlp homolog, found in Desulforamulus reducens (strain ATCC BAA-1160 / DSM 100696 / MI-1) (Desulfotomaculum reducens).